The chain runs to 226 residues: EEF1A lysine methyltransferase 3 (226 aa).

S-adenosyl-L-methionine contacts are provided by residues Trp57, 83–85, Asp104, Trp133, and Ala150; that span reads GAG.

Belongs to the methyltransferase superfamily. METTL21 family. In terms of assembly, interacts with members of the heat shock protein 70 and 90 families and of the TCP-1 chaperonin family, as well as with HSPD1, STIP1 and tubulin; at least some of these proteins may be methylation substrates.

The protein localises to the cytoplasm. Its subcellular location is the cytoskeleton. The protein resides in the microtubule organizing center. It is found in the centrosome. It carries out the reaction L-lysyl-[protein] + 3 S-adenosyl-L-methionine = N(6),N(6),N(6)-trimethyl-L-lysyl-[protein] + 3 S-adenosyl-L-homocysteine + 3 H(+). The enzyme catalyses L-lysyl-[protein] + S-adenosyl-L-methionine = N(6)-methyl-L-lysyl-[protein] + S-adenosyl-L-homocysteine + H(+). The catalysed reaction is N(6)-methyl-L-lysyl-[protein] + S-adenosyl-L-methionine = N(6),N(6)-dimethyl-L-lysyl-[protein] + S-adenosyl-L-homocysteine + H(+). It catalyses the reaction N(6),N(6)-dimethyl-L-lysyl-[protein] + S-adenosyl-L-methionine = N(6),N(6),N(6)-trimethyl-L-lysyl-[protein] + S-adenosyl-L-homocysteine + H(+). Its function is as follows. Protein-lysine methyltransferase that selectively mono-, di- and trimethylates 'Lys-165' of the translation elongation factors EEF1A1 and EEF1A2 in an aminoacyl-tRNA and GTP-dependent manner. EEF1A1 methylation by EEF1AKMT3 is dynamic as well as inducible by stress conditions, such as ER-stress, and plays a regulatory role on mRNA translation. The polypeptide is EEF1A lysine methyltransferase 3 (Bos taurus (Bovine)).